The chain runs to 281 residues: MDAYQSVGIRRRLKRFFRRDGRALIFAMDHGFEHGPTDFEPVWEHVNPRIIIRKVVRAGVDGVMMLPGIVRMAGDELKPDTGLMIKLTSKTELRPKEEQLLQSQLGYVEDAIKLGADAIAATVYWGSPQEDVMMRQFAEIASYAHDLGFPVVQFAYPRGPYINEKYGKKEDYRVVMYGARAAAETGADMIKTYWTGSKETFAKVVDAAAGVPVLLSGGAKTDNPVDFLKVVWDVIEAGGAGAVVGRNIFQRENPEPMIKALIRVIHRNEDPEEAAKAEGLI.

Lysine 191 acts as the Schiff-base intermediate with dihydroxyacetone-P in catalysis.

The protein belongs to the DeoC/FbaB aldolase family. In terms of assembly, homooctamer.

It is found in the cytoplasm. The protein resides in the chromosome. The catalysed reaction is beta-D-fructose 1,6-bisphosphate = D-glyceraldehyde 3-phosphate + dihydroxyacetone phosphate. Its activity is regulated as follows. Activated by citrate. The chain is Fructose-bisphosphate aldolase class 1 (fba) from Thermococcus kodakarensis (strain ATCC BAA-918 / JCM 12380 / KOD1) (Pyrococcus kodakaraensis (strain KOD1)).